Consider the following 332-residue polypeptide: Cytochrome c1, heme protein, mitochondrial (332 aa).

The N-terminal 70 residues, 1-70 (MLARTCLRST…YYHLYGFASA (70 aa)), are a transit peptide targeting the mitochondrion. The Mitochondrial intermembrane segment spans residues 71–277 (MTPAEEGLHA…AEPEMDDRKR (207 aa)). The 154-residue stretch at 97–250 (QALRRGFQVY…GLVDYEDGTP (154 aa)) folds into the Cytochrome c domain. Positions 110, 113, and 114 each coordinate heme c. Over residues 139 to 151 (EENEYDTEPNDQG) the composition is skewed to acidic residues. Residues 139 to 162 (EENEYDTEPNDQGEIEKRPGKLSD) form a disordered region. M234 contacts heme c. Residues 278-296 (MGMKVLVVTSVLFALSVYV) traverse the membrane as a helical segment. Over 297 to 332 (KRYKWAWLKSRKIVYDPPKSPPPATNLALPQQRAKS) the chain is Mitochondrial matrix.

Belongs to the cytochrome c family. Component of the ubiquinol-cytochrome c oxidoreductase (cytochrome b-c1 complex, complex III, CIII), a multisubunit enzyme composed of 10 subunits. The complex is composed of 3 respiratory subunits cytochrome b (cob), cytochrome c1 (cyt-1) and Rieske protein (fes-1), 2 core protein subunits pep and ucr-1, and 5 low-molecular weight protein subunits qcr6, qcr7, qcr8, qcr9 and probably NCU16844/qcr10. The complex exists as an obligatory dimer and forms supercomplexes (SCs) in the inner mitochondrial membrane with NADH-ubiquinone oxidoreductase (complex I, CI) and cytochrome c oxidase (complex IV, CIV), resulting in different assemblies (supercomplexes SCI(1)III(2), SCIII(2)IV(1) and SCIII(2)IV(2) as well as higher order I(x)III(y)IV(z) megacomplexes). The cofactor is heme c.

It is found in the mitochondrion inner membrane. It catalyses the reaction a quinol + 2 Fe(III)-[cytochrome c](out) = a quinone + 2 Fe(II)-[cytochrome c](out) + 2 H(+)(out). Its function is as follows. Component of the ubiquinol-cytochrome c oxidoreductase, a multisubunit transmembrane complex that is part of the mitochondrial electron transport chain which drives oxidative phosphorylation. The respiratory chain contains 3 multisubunit complexes succinate dehydrogenase (complex II, CII), ubiquinol-cytochrome c oxidoreductase (cytochrome b-c1 complex, complex III, CIII) and cytochrome c oxidase (complex IV, CIV), that cooperate to transfer electrons derived from NADH and succinate to molecular oxygen, creating an electrochemical gradient over the inner membrane that drives transmembrane transport and the ATP synthase. The cytochrome b-c1 complex catalyzes electron transfer from ubiquinol to cytochrome c, linking this redox reaction to translocation of protons across the mitochondrial inner membrane, with protons being carried across the membrane as hydrogens on the quinol. In the process called Q cycle, 2 protons are consumed from the matrix, 4 protons are released into the intermembrane space and 2 electrons are passed to cytochrome c. Cytochrome c1 is a catalytic core subunit containing a c-type heme. It transfers electrons from the [2Fe-2S] iron-sulfur cluster of the Rieske protein to cytochrome c. The polypeptide is Cytochrome c1, heme protein, mitochondrial (cyt-1) (Neurospora crassa (strain ATCC 24698 / 74-OR23-1A / CBS 708.71 / DSM 1257 / FGSC 987)).